We begin with the raw amino-acid sequence, 346 residues long: Small ribosomal subunit biogenesis GTPase RsgA (346 aa).

Residues 1–26 (MAKRKLTQNQTRRIQSNNAKTLHRHK) are disordered. The segment covering 7–20 (TQNQTRRIQSNNAK) has biased composition (polar residues). Positions 103–271 (ENEISRPDYY…LIDSPGIREF (169 aa)) constitute a CP-type G domain. GTP-binding positions include 159-162 (NKVD) and 213-221 (GQSGVGKSS). 4 residues coordinate Zn(2+): Cys-295, Cys-300, His-302, and Cys-308.

This sequence belongs to the TRAFAC class YlqF/YawG GTPase family. RsgA subfamily. As to quaternary structure, monomer. Associates with 30S ribosomal subunit, binds 16S rRNA. The cofactor is Zn(2+).

It localises to the cytoplasm. One of several proteins that assist in the late maturation steps of the functional core of the 30S ribosomal subunit. Helps release RbfA from mature subunits. May play a role in the assembly of ribosomal proteins into the subunit. Circularly permuted GTPase that catalyzes slow GTP hydrolysis, GTPase activity is stimulated by the 30S ribosomal subunit. This is Small ribosomal subunit biogenesis GTPase RsgA from Haemophilus influenzae (strain PittGG).